A 497-amino-acid polypeptide reads, in one-letter code: Acetyl-coenzyme A carboxylase carboxyl transferase subunit beta, chloroplastic (497 aa).

The CoA carboxyltransferase N-terminal domain occupies L225 to D497. Positions 229, 232, 248, and 251 each coordinate Zn(2+). Residues C229–C251 form a C4-type zinc finger.

It belongs to the AccD/PCCB family. In terms of assembly, acetyl-CoA carboxylase is a heterohexamer composed of biotin carboxyl carrier protein, biotin carboxylase and 2 subunits each of ACCase subunit alpha and ACCase plastid-coded subunit beta (accD). Zn(2+) is required as a cofactor.

The protein localises to the plastid. It is found in the chloroplast stroma. It carries out the reaction N(6)-carboxybiotinyl-L-lysyl-[protein] + acetyl-CoA = N(6)-biotinyl-L-lysyl-[protein] + malonyl-CoA. It functions in the pathway lipid metabolism; malonyl-CoA biosynthesis; malonyl-CoA from acetyl-CoA: step 1/1. Component of the acetyl coenzyme A carboxylase (ACC) complex. Biotin carboxylase (BC) catalyzes the carboxylation of biotin on its carrier protein (BCCP) and then the CO(2) group is transferred by the transcarboxylase to acetyl-CoA to form malonyl-CoA. The protein is Acetyl-coenzyme A carboxylase carboxyl transferase subunit beta, chloroplastic of Phalaenopsis aphrodite subsp. formosana (Moth orchid).